Reading from the N-terminus, the 1181-residue chain is Cellulose synthase-like protein D5 (1181 aa).

Positions 1–17 are enriched in polar residues; sequence MVKSAASQSPSPVTITV. Disordered regions lie at residues 1–70 and 202–229; these read MVKS…DEGR and KEPY…LPQM. Positions 48-59 are enriched in low complexity; it reads SSRATRRTSISS. A compositionally biased stretch (acidic residues) spans 210 to 222; sequence DDPETEEEDEEDE. Transmembrane regions (helical) follow at residues 312 to 332 and 343 to 363; these read AIIS…GLFL and AMWL…SWLL. Residue D443 is part of the active site. A coiled-coil region spans residues 497 to 542; the sequence is VRERRRVKREYDEFKVRINSLPEAIRRRSDAYNVHEELRAKKKQME. The active site involves D884. 6 helical membrane passes run 966–986, 991–1011, 1038–1058, 1082–1102, 1116–1136, and 1146–1166; these read LFLI…QFIV, ITFL…SLLE, PAAV…SFTL, FLMV…AVGL, LVGG…FAKG, and TIVF…WVYI.

This sequence belongs to the glycosyltransferase 2 family. Plant cellulose synthase-like D subfamily. As to expression, expressed in vascular tissues.

The protein localises to the golgi apparatus membrane. Involved in stem and root growth. Possesses xylan and homogalacturonan synthase activity. The polypeptide is Cellulose synthase-like protein D5 (CSLD5) (Arabidopsis thaliana (Mouse-ear cress)).